Reading from the N-terminus, the 164-residue chain is 2S seed storage protein 3 (164 aa).

Positions 1 to 21 (MANKLFLVCATLALCFLLTNA) are cleaved as a signal peptide. 2 consecutive propeptides follow at residues 22 to 37 (SIYRTVVEFEEDDASN) and 73 to 81 (GPSLDDEFD).

Belongs to the 2S seed storage albumins family. As to quaternary structure, the mature protein consists of a small and a large chain linked by disulfide bonds. Interacts with AHK2.

This is a 2S seed storage protein. This chain is 2S seed storage protein 3 (AT2S3), found in Arabidopsis thaliana (Mouse-ear cress).